A 582-amino-acid chain; its full sequence is MEPSKLFIMSDNATVAPGPVVNAAGKKTFRTCFRILVLSVQAVTLILVIVTLGELIRMINDQGLSNQLSSITDKIRESAAVIASAVGVMNQVIHGVTVSLPLQIEGNQNQLLSTLATICTNRNQVSNCSTNIPLVNDLRFINGINKFIIEDYATHDFSIGNPLNMPSFIPTATSPNGCTRIPSFSLGKTHWCYTHNVINANCKDHTSSNQYVSMGILVQTASGYPMFKTLKIQYLSDGLNRKSCSIATVPDGCAMYCYVSTQLEANDYAGSSPPTQKLTLLFYNDTITERTISPSGLEGNWATLVPGVGSGIYFENKLIFPAYGGVLPNSTLGVKSAREFFRPVNPYNPCSGPPQELDQRALRSYFPRYFSSRRVQSAFLVCAWNQILVTNCELVVPSNNQTLMGAEGRVLLINNRLLYYQRSTSWWPYELLYEISFTFTNSGQSSVNMSWIPIYSFTPPGSGNCSGKNVCPTVCVSGVYLDPWPLTPYSHQSGINRNFYFTGALLNSSTTRVNPTLYVSALNNLKVLAPYGTQGLFASYTTTTCFQDTGDASVYCVYIMELASNIVGEFQILPVLARLTIT.

Residues 1–34 (MEPSKLFIMSDNATVAPGPVVNAAGKKTFRTCFR) are Intravirion-facing. A helical; Signal-anchor for type II membrane protein transmembrane segment spans residues 35–55 (ILVLSVQAVTLILVIVTLGEL). The Virion surface portion of the chain corresponds to 56–582 (IRMINDQGLS…LPVLARLTIT (527 aa)). Cystine bridges form between Cys178–Cys202, Cys192–Cys253, and Cys244–Cys257. Residues 240–245 (NRKSCS) form an involved in neuraminidase activity region. N-linked (GlcNAc...) asparagine; by host glycosylation is found at Asn284 and Asn329. Cystine bridges form between Cys350–Cys471, Cys382–Cys392, and Cys465–Cys475. 2 N-linked (GlcNAc...) asparagine; by host glycosylation sites follow: Asn400 and Asn448. N-linked (GlcNAc...) asparagine; by host glycosylation occurs at Asn507. Cys545 and Cys556 are joined by a disulfide.

This sequence belongs to the paramyxoviruses hemagglutinin-neuraminidase family. Homotetramer; composed of disulfide-linked homodimers. Interacts with F protein trimer.

It is found in the virion membrane. The protein resides in the host cell membrane. It catalyses the reaction Hydrolysis of alpha-(2-&gt;3)-, alpha-(2-&gt;6)-, alpha-(2-&gt;8)- glycosidic linkages of terminal sialic acid residues in oligosaccharides, glycoproteins, glycolipids, colominic acid and synthetic substrates.. Its function is as follows. Attaches the virus to alpha-2,3-linked sialic acid-containing cell receptors and thereby initiating infection. Binding of HN protein to the receptor induces a conformational change that allows the F protein to trigger virion/cell membranes fusion. Binds to the glycan motifs sialyl Lewis (SLe) and GM2 ganglioside (GM2-glycan). Neuraminidase activity ensures the efficient spread of the virus by dissociating the mature virions from the neuraminic acid containing glycoproteins. This is Hemagglutinin-neuraminidase (HN) from Homo sapiens (Human).